The primary structure comprises 411 residues: CCA-adding enzyme (411 aa).

Gly8 and Arg11 together coordinate ATP. Positions 8 and 11 each coordinate CTP. Positions 21 and 23 each coordinate Mg(2+). Arg91, Arg137, and Arg140 together coordinate ATP. The CTP site is built by Arg91, Arg137, and Arg140. The region spanning 227 to 328 is the HD domain; it reads LGNQTMTRLS…MTIFQAFDCW (102 aa).

The protein belongs to the tRNA nucleotidyltransferase/poly(A) polymerase family. Bacterial CCA-adding enzyme type 2 subfamily. Requires Mg(2+) as cofactor.

It catalyses the reaction a tRNA precursor + 2 CTP + ATP = a tRNA with a 3' CCA end + 3 diphosphate. It carries out the reaction a tRNA with a 3' CCA end + 2 CTP + ATP = a tRNA with a 3' CCACCA end + 3 diphosphate. Functionally, catalyzes the addition and repair of the essential 3'-terminal CCA sequence in tRNAs without using a nucleic acid template. Adds these three nucleotides in the order of C, C, and A to the tRNA nucleotide-73, using CTP and ATP as substrates and producing inorganic pyrophosphate. tRNA 3'-terminal CCA addition is required both for tRNA processing and repair. Also involved in tRNA surveillance by mediating tandem CCA addition to generate a CCACCA at the 3' terminus of unstable tRNAs. While stable tRNAs receive only 3'-terminal CCA, unstable tRNAs are marked with CCACCA and rapidly degraded. In Blochmanniella floridana, this protein is CCA-adding enzyme.